A 589-amino-acid chain; its full sequence is Arginine--tRNA ligase (589 aa).

The 'HIGH' region motif lies at 132–142 (PNTNKPLHVGH).

This sequence belongs to the class-I aminoacyl-tRNA synthetase family. Monomer.

It localises to the cytoplasm. It carries out the reaction tRNA(Arg) + L-arginine + ATP = L-arginyl-tRNA(Arg) + AMP + diphosphate. In Treponema pallidum subsp. pallidum (strain SS14), this protein is Arginine--tRNA ligase.